Here is a 256-residue protein sequence, read N- to C-terminus: uncharacterized protein (256 aa).

This is an uncharacterized protein from Treponema pallidum (strain Nichols).